The following is a 32-amino-acid chain: Photosystem II reaction center protein T (32 aa).

The helical transmembrane segment at 3–23 threads the bilayer; it reads AITYTFILFLTLGLLFFAVAF.

This sequence belongs to the PsbT family. As to quaternary structure, PSII is composed of 1 copy each of membrane proteins PsbA, PsbB, PsbC, PsbD, PsbE, PsbF, PsbH, PsbI, PsbJ, PsbK, PsbL, PsbM, PsbT, PsbX, PsbY, PsbZ, Psb30/Ycf12, peripheral proteins PsbO, CyanoQ (PsbQ), PsbU, PsbV and a large number of cofactors. It forms dimeric complexes.

It localises to the cellular thylakoid membrane. Its function is as follows. Found at the monomer-monomer interface of the photosystem II (PS II) dimer, plays a role in assembly and dimerization of PSII. PSII is a light-driven water plastoquinone oxidoreductase, using light energy to abstract electrons from H(2)O, generating a proton gradient subsequently used for ATP formation. In Synechococcus sp. (strain JA-2-3B'a(2-13)) (Cyanobacteria bacterium Yellowstone B-Prime), this protein is Photosystem II reaction center protein T.